The following is a 166-amino-acid chain: Large ribosomal subunit protein uL10 (166 aa).

It belongs to the universal ribosomal protein uL10 family. As to quaternary structure, part of the ribosomal stalk of the 50S ribosomal subunit. The N-terminus interacts with L11 and the large rRNA to form the base of the stalk. The C-terminus forms an elongated spine to which L12 dimers bind in a sequential fashion forming a multimeric L10(L12)X complex.

In terms of biological role, forms part of the ribosomal stalk, playing a central role in the interaction of the ribosome with GTP-bound translation factors. This Ureaplasma parvum serovar 3 (strain ATCC 27815 / 27 / NCTC 11736) protein is Large ribosomal subunit protein uL10.